A 447-amino-acid chain; its full sequence is Ribosomal protein uS12 methylthiotransferase RimO (447 aa).

Residues 4-114 enclose the MTTase N-terminal domain; sequence PKVGFVSLGC…VMEAVHEYVP (111 aa). Positions 13, 49, 78, 147, 151, and 154 each coordinate [4Fe-4S] cluster. In terms of domain architecture, Radical SAM core spans 133–370; it reads LTPKHYAYLK…MQVQQQISAA (238 aa). Residues 373 to 443 form the TRAM domain; the sequence is QKRIGQTMTV…EYDLFAKLIK (71 aa).

This sequence belongs to the methylthiotransferase family. RimO subfamily. The cofactor is [4Fe-4S] cluster.

It is found in the cytoplasm. The catalysed reaction is L-aspartate(89)-[ribosomal protein uS12]-hydrogen + (sulfur carrier)-SH + AH2 + 2 S-adenosyl-L-methionine = 3-methylsulfanyl-L-aspartate(89)-[ribosomal protein uS12]-hydrogen + (sulfur carrier)-H + 5'-deoxyadenosine + L-methionine + A + S-adenosyl-L-homocysteine + 2 H(+). Catalyzes the methylthiolation of an aspartic acid residue of ribosomal protein uS12. This is Ribosomal protein uS12 methylthiotransferase RimO from Acinetobacter baumannii (strain AB307-0294).